We begin with the raw amino-acid sequence, 125 residues long: Holo-[acyl-carrier-protein] synthase (125 aa).

Asp-7 and Glu-56 together coordinate Mg(2+).

Belongs to the P-Pant transferase superfamily. AcpS family. Mg(2+) is required as a cofactor.

Its subcellular location is the cytoplasm. The catalysed reaction is apo-[ACP] + CoA = holo-[ACP] + adenosine 3',5'-bisphosphate + H(+). Its function is as follows. Transfers the 4'-phosphopantetheine moiety from coenzyme A to a Ser of acyl-carrier-protein. This chain is Holo-[acyl-carrier-protein] synthase, found in Chlamydia muridarum (strain MoPn / Nigg).